The chain runs to 83 residues: ATP synthase subunit c, chloroplastic (83 aa).

A run of 2 helical transmembrane segments spans residues 4-24 and 57-77; these read IISAASVIAAGLAVGLAAIGP and LAFMEALTIYGLVVALSLLFA.

Belongs to the ATPase C chain family. F-type ATPases have 2 components, F(1) - the catalytic core - and F(0) - the membrane proton channel. F(1) has five subunits: alpha(3), beta(3), gamma(1), delta(1), epsilon(1). F(0) has four main subunits: a(1), b(1), b'(1) and c(10-14). The alpha and beta chains form an alternating ring which encloses part of the gamma chain. F(1) is attached to F(0) by a central stalk formed by the gamma and epsilon chains, while a peripheral stalk is formed by the delta, b and b' chains.

Its subcellular location is the plastid. It is found in the chloroplast thylakoid membrane. In terms of biological role, f(1)F(0) ATP synthase produces ATP from ADP in the presence of a proton or sodium gradient. F-type ATPases consist of two structural domains, F(1) containing the extramembraneous catalytic core and F(0) containing the membrane proton channel, linked together by a central stalk and a peripheral stalk. During catalysis, ATP synthesis in the catalytic domain of F(1) is coupled via a rotary mechanism of the central stalk subunits to proton translocation. Key component of the F(0) channel; it plays a direct role in translocation across the membrane. A homomeric c-ring of between 10-14 subunits forms the central stalk rotor element with the F(1) delta and epsilon subunits. The protein is ATP synthase subunit c, chloroplastic of Galdieria sulphuraria (Red alga).